The following is a 130-amino-acid chain: MAQVQYYGTGRRKSSVARVRLVPGDGKIVINNRDWEDYIPFAALREVIKQPLVATETLGNYDVLVNVRGGGYTGQAGAIRHGVARALLQVAPEYRPALKSAGLLTRDSRMKERKKPGLKGARRAPQFSKR.

A disordered region spans residues 105–130 (TRDSRMKERKKPGLKGARRAPQFSKR). Over residues 111-130 (KERKKPGLKGARRAPQFSKR) the composition is skewed to basic residues.

It belongs to the universal ribosomal protein uS9 family.

In Listeria welshimeri serovar 6b (strain ATCC 35897 / DSM 20650 / CCUG 15529 / CIP 8149 / NCTC 11857 / SLCC 5334 / V8), this protein is Small ribosomal subunit protein uS9.